Consider the following 765-residue polypeptide: Polyribonucleotide nucleotidyltransferase (765 aa).

Mg(2+) contacts are provided by Asp556 and Asp562. The 60-residue stretch at 622 to 681 (PRITKISIPQNKIGEVIGPKGKTINQITEETGANISIEDDGTVFVSAVGGEAAEAAIEKI) folds into the KH domain. The S1 motif domain maps to 693 to 762 (GDRFLGTVVK…NRGKISLVPV (70 aa)).

Belongs to the polyribonucleotide nucleotidyltransferase family. Mg(2+) serves as cofactor.

The protein localises to the cytoplasm. The catalysed reaction is RNA(n+1) + phosphate = RNA(n) + a ribonucleoside 5'-diphosphate. Its function is as follows. Involved in mRNA degradation. Catalyzes the phosphorolysis of single-stranded polyribonucleotides processively in the 3'- to 5'-direction. The polypeptide is Polyribonucleotide nucleotidyltransferase (Corynebacterium urealyticum (strain ATCC 43042 / DSM 7109)).